The chain runs to 122 residues: Large ribosomal subunit protein uL14 (122 aa).

Belongs to the universal ribosomal protein uL14 family. In terms of assembly, part of the 50S ribosomal subunit. Forms a cluster with proteins L3 and L19. In the 70S ribosome, L14 and L19 interact and together make contacts with the 16S rRNA in bridges B5 and B8.

In terms of biological role, binds to 23S rRNA. Forms part of two intersubunit bridges in the 70S ribosome. This Streptococcus agalactiae serotype Ia (strain ATCC 27591 / A909 / CDC SS700) protein is Large ribosomal subunit protein uL14.